Here is a 526-residue protein sequence, read N- to C-terminus: Cholesterol side-chain cleavage enzyme, mitochondrial (526 aa).

A mitochondrion-targeting transit peptide spans 1–36; the sequence is MLAKGLSLRSVLVKGCQPFLSPTWQGPVLSTGKGAG. Residues 30 to 41 show a composition bias toward low complexity; it reads STGKGAGTSTSS. Residues 30 to 49 form a disordered region; that stretch reads STGKGAGTSTSSPRSFNEIP. Cys458 provides a ligand contact to heme.

Belongs to the cytochrome P450 family. As to quaternary structure, interacts with FDX1/adrenodoxin. It depends on heme as a cofactor.

The protein localises to the mitochondrion inner membrane. The catalysed reaction is 6 reduced [adrenodoxin] + cholesterol + 3 O2 + 6 H(+) = 4-methylpentanal + pregnenolone + 6 oxidized [adrenodoxin] + 4 H2O. It catalyses the reaction 2 reduced [adrenodoxin] + cholesterol + O2 + 2 H(+) = (22R)-hydroxycholesterol + 2 oxidized [adrenodoxin] + H2O. The enzyme catalyses (22R)-hydroxycholesterol + 2 reduced [adrenodoxin] + O2 + 2 H(+) = (20R,22R)-20,22-dihydroxycholesterol + 2 oxidized [adrenodoxin] + H2O. It carries out the reaction (20R,22R)-20,22-dihydroxycholesterol + 2 reduced [adrenodoxin] + O2 + 2 H(+) = 4-methylpentanal + pregnenolone + 2 oxidized [adrenodoxin] + 2 H2O. Its pathway is lipid metabolism; C21-steroid hormone metabolism. The protein operates within steroid metabolism; cholesterol metabolism. Functionally, a cytochrome P450 monooxygenase that catalyzes the side-chain hydroxylation and cleavage of cholesterol to pregnenolone, the precursor of most steroid hormones. Catalyzes three sequential oxidation reactions of cholesterol, namely the hydroxylation at C22 followed with the hydroxylation at C20 to yield 20R,22R-hydroxycholesterol that is further cleaved between C20 and C22 to yield the C21-steroid pregnenolone and 4-methylpentanal. Mechanistically, uses molecular oxygen inserting one oxygen atom into a substrate and reducing the second into a water molecule. Two electrons are provided by NADPH via a two-protein mitochondrial transfer system comprising flavoprotein FDXR (adrenodoxin/ferredoxin reductase) and nonheme iron-sulfur protein FDX1 or FDX2 (adrenodoxin/ferredoxin). This chain is Cholesterol side-chain cleavage enzyme, mitochondrial, found in Mus musculus (Mouse).